The following is a 235-amino-acid chain: Orotidine 5'-phosphate decarboxylase (235 aa).

Substrate-binding positions include aspartate 11, lysine 33, 60 to 69, threonine 119, arginine 180, glutamine 189, glycine 209, and arginine 210; that span reads DLKFHDIPNT. Lysine 62 functions as the Proton donor in the catalytic mechanism.

This sequence belongs to the OMP decarboxylase family. Type 1 subfamily. Homodimer.

It carries out the reaction orotidine 5'-phosphate + H(+) = UMP + CO2. It functions in the pathway pyrimidine metabolism; UMP biosynthesis via de novo pathway; UMP from orotate: step 2/2. In terms of biological role, catalyzes the decarboxylation of orotidine 5'-monophosphate (OMP) to uridine 5'-monophosphate (UMP). The protein is Orotidine 5'-phosphate decarboxylase of Alkalilimnicola ehrlichii (strain ATCC BAA-1101 / DSM 17681 / MLHE-1).